A 708-amino-acid polypeptide reads, in one-letter code: Glycine--tRNA ligase beta subunit (708 aa).

The protein belongs to the class-II aminoacyl-tRNA synthetase family. In terms of assembly, tetramer of two alpha and two beta subunits.

The protein localises to the cytoplasm. The enzyme catalyses tRNA(Gly) + glycine + ATP = glycyl-tRNA(Gly) + AMP + diphosphate. This Methylobacillus flagellatus (strain ATCC 51484 / DSM 6875 / VKM B-1610 / KT) protein is Glycine--tRNA ligase beta subunit.